The sequence spans 555 residues: Inositol 1,4,5-triphosphate receptor associated 2 (555 aa).

The Cytoplasmic segment spans residues 1–495 (MESTPFSGVA…LKSSIRKANK (495 aa)). 2 disordered regions span residues 84–103 (SLPLPRHTSSTDGTITSSDP) and 128–147 (RSASPTIEAQGTSPAHDNIA). The residue at position 91 (Thr91) is a Phosphothreonine. Residues 91–102 (TSSTDGTITSSD) show a composition bias toward low complexity. Polar residues predominate over residues 129 to 142 (SASPTIEAQGTSPA). The stretch at 227 to 341 (TLEKRVKLEE…LEELKQVLLQ (115 aa)) forms a coiled coil. A phosphoserine mark is found at Ser363, Ser370, and Ser424. Residues 437-469 (ELKTKDDSEPSGEETVERTRKPSLSEKKNNPSK) form a disordered region. Positions 451-465 (TVERTRKPSLSEKKN) are enriched in basic and acidic residues. Residues 496-516 (ALWLSIAFIVLFAALMSFLTG) form a helical; Anchor for type IV membrane protein membrane-spanning segment. Topologically, residues 517–555 (QLFQKSVDAAPTQQEDSWTSLEHILWPFTRLRHNGPPPV) are lumenal.

This sequence belongs to the IRAG2 family. In terms of assembly, interacts (via coiled-coil domain) with ITPR3. Interacts with SUN1 and SUN2. Interacts with microtubules. Interacts with HCN4; regulates HCN4 channel activity. In terms of processing, the removal of the C-terminal lumenal domain occurs by proteolytic processing. As to expression, expressed at high levels in pre B-cells, mature B-cells and pre T-cells. Expressed at low levels in mature T-cells and plasma B-cells. Expressed in germinal center B-cells, splenic marginal zone cells and B-cell lymphomas. Expressed in neuronal cells in the cerebral cortex, epithelial cells in tonsil, adrenal glands, zymogen-producing cells in the stomach and epithelial cells in seminal vesicles.

The protein resides in the cytoplasm. It localises to the endoplasmic reticulum membrane. Its subcellular location is the nucleus envelope. The protein localises to the cytoskeleton. It is found in the microtubule organizing center. The protein resides in the centrosome. It localises to the spindle pole. Its subcellular location is the chromosome. In terms of biological role, plays a role in the delivery of peptides to major histocompatibility complex (MHC) class I molecules; this occurs in a transporter associated with antigen processing (TAP)-independent manner. May play a role in taste signal transduction via ITPR3. May play a role during fertilization in pronucleus congression and fusion. Plays a role in maintaining nuclear shape, maybe as a component of the LINC complex and through interaction with microtubules. Plays a role in the regulation of cellular excitability by regulating the hyperpolarization-activated cyclic nucleotide-gated HCN4 channel activity. This Homo sapiens (Human) protein is Inositol 1,4,5-triphosphate receptor associated 2.